The primary structure comprises 151 residues: Large-conductance mechanosensitive channel (151 aa).

2 helical membrane passes run 19–39 (VGII…GDVL) and 85–105 (GLFI…FFLV).

Belongs to the MscL family. Homopentamer.

The protein localises to the cell inner membrane. Channel that opens in response to stretch forces in the membrane lipid bilayer. May participate in the regulation of osmotic pressure changes within the cell. The chain is Large-conductance mechanosensitive channel from Chlorobaculum parvum (strain DSM 263 / NCIMB 8327) (Chlorobium vibrioforme subsp. thiosulfatophilum).